A 198-amino-acid polypeptide reads, in one-letter code: ATP-dependent Clp protease proteolytic subunit 1 (198 aa).

Ser96 serves as the catalytic Nucleophile. His121 is a catalytic residue.

The protein belongs to the peptidase S14 family. In terms of assembly, fourteen ClpP subunits assemble into 2 heptameric rings which stack back to back to give a disk-like structure with a central cavity, resembling the structure of eukaryotic proteasomes.

It localises to the cytoplasm. It catalyses the reaction Hydrolysis of proteins to small peptides in the presence of ATP and magnesium. alpha-casein is the usual test substrate. In the absence of ATP, only oligopeptides shorter than five residues are hydrolyzed (such as succinyl-Leu-Tyr-|-NHMec, and Leu-Tyr-Leu-|-Tyr-Trp, in which cleavage of the -Tyr-|-Leu- and -Tyr-|-Trp bonds also occurs).. In terms of biological role, cleaves peptides in various proteins in a process that requires ATP hydrolysis. Has a chymotrypsin-like activity. Plays a major role in the degradation of misfolded proteins. This Synechocystis sp. (strain ATCC 27184 / PCC 6803 / Kazusa) protein is ATP-dependent Clp protease proteolytic subunit 1.